The primary structure comprises 489 residues: Cryptochrome DASH (489 aa).

One can recognise a Photolyase/cryptochrome alpha/beta domain in the interval 6–140 (PTVLVWFRND…EAKGYWGSTL (135 aa)).

The protein belongs to the DNA photolyase class-1 family. It depends on FAD as a cofactor. Requires (6R)-5,10-methylene-5,6,7,8-tetrahydrofolate as cofactor.

In terms of biological role, may have a photoreceptor function. Binds DNA; represses transcription of at least 8 genes, including slr0364 and slr1866. Does not encode a DNA photolyase function. Its disruption does not affect circadian rhythm. In Synechocystis sp. (strain ATCC 27184 / PCC 6803 / Kazusa), this protein is Cryptochrome DASH (cry).